The primary structure comprises 261 residues: tRNA U34 carboxymethyltransferase (261 aa).

Carboxy-S-adenosyl-L-methionine contacts are provided by residues K25, W39, K44, G63, V114–E115, Y135, and R250.

Belongs to the class I-like SAM-binding methyltransferase superfamily. CmoB family. As to quaternary structure, homotetramer.

The enzyme catalyses carboxy-S-adenosyl-L-methionine + 5-hydroxyuridine(34) in tRNA = 5-carboxymethoxyuridine(34) in tRNA + S-adenosyl-L-homocysteine + H(+). Functionally, catalyzes carboxymethyl transfer from carboxy-S-adenosyl-L-methionine (Cx-SAM) to 5-hydroxyuridine (ho5U) to form 5-carboxymethoxyuridine (cmo5U) at position 34 in tRNAs. In Helicobacter pylori (strain G27), this protein is tRNA U34 carboxymethyltransferase.